A 78-amino-acid chain; its full sequence is Cytochrome c oxidase subunit 6b-3 (78 aa).

Residues 22-65 enclose the CHCH domain; the sequence is TRHCFTRYIEFHRCTTAKGEDANECERFAKYYRALCPGEWVDKW. The Cx9C motif motif lies at 25-35; that stretch reads CFTRYIEFHRC. Cystine bridges form between C25–C57 and C35–C46. The short motif at 46 to 57 is the Cx10C motif element; it reads CERFAKYYRALC.

It belongs to the cytochrome c oxidase subunit 6B (TC 3.D.4.8) family. As to expression, expressed in the whole plant.

It is found in the mitochondrion. This protein is one of the nuclear-coded polypeptide chains of cytochrome c oxidase, the terminal oxidase in mitochondrial electron transport. This protein may be one of the heme-binding subunits of the oxidase. This is Cytochrome c oxidase subunit 6b-3 (COX6B-3) from Arabidopsis thaliana (Mouse-ear cress).